The following is a 925-amino-acid chain: MDYGKTLNLPVTDFPMRGNLPEREPEILAYWQKIDLYRKVQQKNEGRPKFILHDGPPYANGDIHMGHVLNKVLKDMIVKFKSMDGYDAPYVPGWDTHGLPIEQRAIKDLGINRKEISPLEFRAKCREYAEKYARIQKEQFKRLGVRGDWENPYLTLMPHYEAKQIEIFGEMAKKGYIYKGLKPVYWCPVCETALAEAEIEYAEKKSPSIYVRFKVVEGKGKVPEDAYLVIWTTTPWTLPANVAIAVHPEFTYALVKTEKGDYVVAEGLVQQFFEATKLTGEIVARFKGEELLGVVTRHPFIERESPVVLADYVTLESGTGLVHTAPGHGTEDFETGKKYNLPVLSPVNHQGVFTEGAGKYAGMKIDDGNKAITQDLEASGDLLAMSFIKHSYPHCWRCKNPVIFRATEQWFASIDGFREQALKEIEKVEWIPAWGKDRIYNMVRDRGDWCISRQRTWGVPIPIFYCEACGKEIITDESIKAVSDLFRVEGSDAWWKYEAGEILPDGFRCPHCGGVKFRKETDIMDVWFDSGSSHAAVLEQPEYWPDLRWPADLYLEGSDQHRGWFNSSLSTAVATRGMAPYKAVLTHGFLVDEKGRKMSKSLGNVVDPLKVIKELGADILRLWVASADYRSDLAISNNILKQTAEGYRKIRNTIRFLLGNLYDYDHEKHRVPYERLLEIDRWALAKLHRLIARVVRAYRDYEFHVVFHAVHNFCTVDMSAIYLDIIKDRLYVELPDSEKRRSAQTVLYEILDSLLRLLTPILAFTTEEAYRHFPAKGKKESVQLLDMPKVEERYLDLTLEETWDKILEVRAKVLKALEIARQEKLIGHSLDAWVTLKASGELYDFLVERVNMWPEIFIVSQVDIQNEEVTGENGELPLEVVVNKALGEKCQRCWMYSPEVGLDPEFPDTCPRCAGVLHELKNRPL.

The 'HIGH' region motif lies at 57-67 (PYANGDIHMGH). Residue Glu-556 participates in L-isoleucyl-5'-AMP binding. A 'KMSKS' region motif is present at residues 597–601 (KMSKS). An ATP-binding site is contributed by Lys-600. The Zn(2+) site is built by Cys-890, Cys-893, Cys-910, and Cys-913.

The protein belongs to the class-I aminoacyl-tRNA synthetase family. IleS type 1 subfamily. Monomer. Zn(2+) serves as cofactor.

Its subcellular location is the cytoplasm. The enzyme catalyses tRNA(Ile) + L-isoleucine + ATP = L-isoleucyl-tRNA(Ile) + AMP + diphosphate. Functionally, catalyzes the attachment of isoleucine to tRNA(Ile). As IleRS can inadvertently accommodate and process structurally similar amino acids such as valine, to avoid such errors it has two additional distinct tRNA(Ile)-dependent editing activities. One activity is designated as 'pretransfer' editing and involves the hydrolysis of activated Val-AMP. The other activity is designated 'posttransfer' editing and involves deacylation of mischarged Val-tRNA(Ile). The chain is Isoleucine--tRNA ligase from Carboxydothermus hydrogenoformans (strain ATCC BAA-161 / DSM 6008 / Z-2901).